We begin with the raw amino-acid sequence, 476 residues long: Bifunctional protein HldE (476 aa).

The tract at residues 1-319 (MKISLPAFEK…EALSLSHGES (319 aa)) is ribokinase. Position 195–198 (195–198 (NMSE)) interacts with ATP. D264 is a catalytic residue. The tract at residues 345–476 (MTNGCFDILH…AIIQNIMANQ (132 aa)) is cytidylyltransferase.

The protein in the N-terminal section; belongs to the carbohydrate kinase PfkB family. This sequence in the C-terminal section; belongs to the cytidylyltransferase family. Homodimer.

It catalyses the reaction D-glycero-beta-D-manno-heptose 7-phosphate + ATP = D-glycero-beta-D-manno-heptose 1,7-bisphosphate + ADP + H(+). It carries out the reaction D-glycero-beta-D-manno-heptose 1-phosphate + ATP + H(+) = ADP-D-glycero-beta-D-manno-heptose + diphosphate. It functions in the pathway nucleotide-sugar biosynthesis; ADP-L-glycero-beta-D-manno-heptose biosynthesis; ADP-L-glycero-beta-D-manno-heptose from D-glycero-beta-D-manno-heptose 7-phosphate: step 1/4. It participates in nucleotide-sugar biosynthesis; ADP-L-glycero-beta-D-manno-heptose biosynthesis; ADP-L-glycero-beta-D-manno-heptose from D-glycero-beta-D-manno-heptose 7-phosphate: step 3/4. In terms of biological role, catalyzes the phosphorylation of D-glycero-D-manno-heptose 7-phosphate at the C-1 position to selectively form D-glycero-beta-D-manno-heptose-1,7-bisphosphate. Its function is as follows. Catalyzes the ADP transfer from ATP to D-glycero-beta-D-manno-heptose 1-phosphate, yielding ADP-D-glycero-beta-D-manno-heptose. This Shewanella pealeana (strain ATCC 700345 / ANG-SQ1) protein is Bifunctional protein HldE.